The primary structure comprises 1959 residues: Myosin-9 (1959 aa).

The region spanning 27–77 (AAKKLVWVPSEKSGFEAASLKEEVGDEAIVELAENGKKVKVNKDDIQKMNP) is the Myosin N-terminal SH3-like domain. A Myosin motor domain is found at 81–776 (SKVEDMAELT…VLAHLEEERD (696 aa)). 174-181 (GESGAGKT) contributes to the ATP binding site. The actin-binding stretch occupies residues 654-676 (LAKLMATLRNTNPNFVRCIIPNH). The region spanning 779-808 (ITDVIIGFQACCRGYLARKAFAKRQQQLTA) is the IQ domain. Positions 837–1925 (LLQVSRQEEE…LKSKLRRGDL (1089 aa)) form a coiled coil. Disordered regions lie at residues 1118-1168 (EDLE…REQE), 1694-1717 (RAKR…SGKG), 1879-1917 (LEEA…SSLK), and 1936-1959 (KGTG…KATE). 2 stretches are compositionally biased toward basic and acidic residues: residues 1122–1148 (SERA…KTEL) and 1694–1704 (RAKRQAQQERD). Over residues 1947-1959 (DGKAEAGDAKATE) the composition is skewed to basic and acidic residues.

Belongs to the TRAFAC class myosin-kinesin ATPase superfamily. Myosin family. Myosin is a hexameric protein that consists of 2 heavy chain subunits (MHC), 2 alkali light chain subunits (MLC) and 2 regulatory light chain subunits (MLC-2). In terms of tissue distribution, expressed in fibroblasts, brain, lung, kidney, spleen, and skeletal, cardiac and smooth muscles.

It localises to the cytoplasm. It is found in the cytoskeleton. The protein resides in the cell cortex. Its subcellular location is the cytoplasmic vesicle. The protein localises to the secretory vesicle. It localises to the cortical granule. Cellular myosin that appears to play a role in cytokinesis, cell shape, and specialized functions such as secretion and capping. This chain is Myosin-9 (MYH9), found in Gallus gallus (Chicken).